We begin with the raw amino-acid sequence, 519 residues long: T-complex protein 11-like protein 2 (519 aa).

The interval 1–57 (MPFNGEKQCVSEDQPSDSDSSRFSESMASLSDYECSRQSFTSDSSSKSSSPASTSPP) is disordered. The residue at position 16 (S16) is a Phosphoserine. Low complexity-rich tracts occupy residues 17–29 (DSDS…SMAS) and 36–55 (SRQS…ASTS).

The protein belongs to the TCP11 family. Interacts with FMNL2; this interaction promotes muscle-derived satellite cell (MDSC) migration and differentiation.

The protein localises to the cytoplasm. The protein resides in the cytoskeleton. Functionally, promotes the migration of muscle-derived satellite cells (MDSCs) during differentiation throught interaction with FMNL2 and therefore may participate in microfilament assembly. This is T-complex protein 11-like protein 2 from Bos taurus (Bovine).